We begin with the raw amino-acid sequence, 240 residues long: Proteasome subunit alpha (240 aa).

It belongs to the peptidase T1A family. In terms of assembly, the 20S proteasome core is composed of 14 alpha and 14 beta subunits that assemble into four stacked heptameric rings, resulting in a barrel-shaped structure. The two inner rings, each composed of seven catalytic beta subunits, are sandwiched by two outer rings, each composed of seven alpha subunits. The catalytic chamber with the active sites is on the inside of the barrel. Has a gated structure, the ends of the cylinder being occluded by the N-termini of the alpha-subunits. Is capped at one or both ends by the proteasome regulatory ATPase, PAN.

The protein resides in the cytoplasm. Its activity is regulated as follows. The formation of the proteasomal ATPase PAN-20S proteasome complex, via the docking of the C-termini of PAN into the intersubunit pockets in the alpha-rings, triggers opening of the gate for substrate entry. Interconversion between the open-gate and close-gate conformations leads to a dynamic regulation of the 20S proteasome proteolysis activity. Component of the proteasome core, a large protease complex with broad specificity involved in protein degradation. The chain is Proteasome subunit alpha from Methanoculleus marisnigri (strain ATCC 35101 / DSM 1498 / JR1).